Reading from the N-terminus, the 446-residue chain is Phosphoglucosamine mutase (446 aa).

Ser101 acts as the Phosphoserine intermediate in catalysis. Positions 101, 240, 242, and 244 each coordinate Mg(2+). Ser101 bears the Phosphoserine mark.

Belongs to the phosphohexose mutase family. Requires Mg(2+) as cofactor. In terms of processing, activated by phosphorylation.

It carries out the reaction alpha-D-glucosamine 1-phosphate = D-glucosamine 6-phosphate. Its function is as follows. Catalyzes the conversion of glucosamine-6-phosphate to glucosamine-1-phosphate. The protein is Phosphoglucosamine mutase of Pseudomonas putida (strain W619).